Reading from the N-terminus, the 319-residue chain is Peroxidase 62 (319 aa).

The N-terminal stretch at 1-22 (MGLVRSFALVIVFLSCLIAVYG) is a signal peptide. Cystine bridges form between cysteine 34-cysteine 110, cysteine 67-cysteine 72, cysteine 116-cysteine 315, and cysteine 195-cysteine 226. Histidine 65 (proton acceptor) is an active-site residue. Ca(2+) contacts are provided by aspartate 66, valine 69, glycine 71, aspartate 73, and serine 75. Substrate is bound at residue proline 157. Histidine 188 serves as a coordination point for heme b. Threonine 189 is a Ca(2+) binding site. N-linked (GlcNAc...) asparagine glycosylation is present at asparagine 204. 3 residues coordinate Ca(2+): aspartate 239, serine 242, and aspartate 247. The N-linked (GlcNAc...) asparagine glycan is linked to asparagine 253.

It belongs to the peroxidase family. Classical plant (class III) peroxidase subfamily. Heme b is required as a cofactor. It depends on Ca(2+) as a cofactor. As to expression, mainly expressed in roots.

It localises to the secreted. It catalyses the reaction 2 a phenolic donor + H2O2 = 2 a phenolic radical donor + 2 H2O. Functionally, removal of H(2)O(2), oxidation of toxic reductants, biosynthesis and degradation of lignin, suberization, auxin catabolism, response to environmental stresses such as wounding, pathogen attack and oxidative stress. These functions might be dependent on each isozyme/isoform in each plant tissue. In Arabidopsis thaliana (Mouse-ear cress), this protein is Peroxidase 62 (PER62).